Reading from the N-terminus, the 1193-residue chain is Probable cation-transporting ATPase 13A4 (1193 aa).

At 1-32 (MGDHLEKSQHALLNEGDENEMEIFGYRTQGCR) the chain is on the cytoplasmic side. The stretch at 33 to 53 (KALCLIGSIFSLGMLPLVFYW) is an intramembrane region. Residues 54–198 (RPAWRVWANC…DVEITPIWKL (145 aa)) are Cytoplasmic-facing. A helical membrane pass occupies residues 199–219 (LIKEVLNPFYIFQLFSVCLWF). Topologically, residues 220–224 (SEDYK) are lumenal. A helical transmembrane segment spans residues 225–245 (EYALAIILMSVISIALTVYDL). The Cytoplasmic segment spans residues 246-401 (RQQSVKLHHL…NFKLYRDAIR (156 aa)). Residues 402 to 422 (FLLCLVGTATIGMVYTLCVYV) form a helical membrane-spanning segment. The Lumenal portion of the chain corresponds to 423-437 (LSGEPPEEVVRKALD). Residues 438-458 (VITIAVPPALPAALTTGIIYA) traverse the membrane as a helical segment. At 459–901 (QRRLKKKGIF…KEGRAALVTS (443 aa)) the chain is on the cytoplasmic side. The active-site 4-aspartylphosphate intermediate is aspartate 487. Mg(2+)-binding residues include aspartate 849 and aspartate 853. The chain crosses the membrane as a helical span at residues 902-922 (FCMFKYMALYSMIQYVGVLLL). Over 923–933 (YWKTNSLSNYQ) the chain is Lumenal. The helical transmembrane segment at 934 to 954 (FLFQDLAITTLIGVTMNLNGA) threads the bilayer. The Cytoplasmic segment spans residues 955–973 (NPKLVPFRPAGRLISPPLL). Residues 974 to 994 (LSVVLNILLSLAMHIVGFILV) traverse the membrane as a helical segment. Over 995-1036 (QKQPWYIMDYHSVCPVRNESASALAASPSVPEKTRSNSTFAS) the chain is Lumenal. A helical transmembrane segment spans residues 1037-1057 (FENTTIWFLGTINCIFVALVF). The Cytoplasmic segment spans residues 1058–1071 (SKGKPFRQPTYTNY). The chain crosses the membrane as a helical span at residues 1072–1092 (IFVLVLILQMGVCLFILFADI). Residues 1093–1105 (PEMHRRLDLLCTP) are Lumenal-facing. A helical transmembrane segment spans residues 1106–1126 (VLWRVYILIMISSNFVVSLAV). The Cytoplasmic segment spans residues 1127–1193 (EKAIIENRAL…PVFESNEEQL (67 aa)).

This sequence belongs to the cation transport ATPase (P-type) (TC 3.A.3) family. Type V subfamily. As to expression, expressed in brain and stomach.

The protein localises to the early endosome membrane. The protein resides in the late endosome membrane. Its subcellular location is the recycling endosome membrane. The catalysed reaction is ATP + H2O = ADP + phosphate + H(+). The sequence is that of Probable cation-transporting ATPase 13A4 (Atp13a4) from Mus musculus (Mouse).